We begin with the raw amino-acid sequence, 373 residues long: Mannitol-1-phosphate 5-dehydrogenase (373 aa).

Residue 3–14 coordinates NAD(+); it reads ALHFGAGNIGRG.

Belongs to the mannitol dehydrogenase family.

The catalysed reaction is D-mannitol 1-phosphate + NAD(+) = beta-D-fructose 6-phosphate + NADH + H(+). This Bacillus velezensis (strain DSM 23117 / BGSC 10A6 / LMG 26770 / FZB42) (Bacillus amyloliquefaciens subsp. plantarum) protein is Mannitol-1-phosphate 5-dehydrogenase.